A 90-amino-acid chain; its full sequence is uncharacterized protein (90 aa).

This is an uncharacterized protein from Thermoproteus tenax (TTV1).